The sequence spans 566 residues: Poly(A) polymerase pla1 (566 aa).

ATP contacts are provided by residues 86-88, 99-101, D153, K214, Y223, and 232-233; these read YGS, DID, and GV. Residues D99, D101, and D153 each coordinate Mg(2+). Disordered regions lie at residues 437 to 463 and 530 to 566; these read HEKL…SENG and DEVF…VSTA.

The protein belongs to the poly(A) polymerase family. The cofactor is Mg(2+). Mn(2+) serves as cofactor.

The protein resides in the nucleus. It catalyses the reaction RNA(n) + ATP = RNA(n)-3'-adenine ribonucleotide + diphosphate. In terms of biological role, polymerase that creates the 3'-poly(A) tail of mRNA's. May acquire specificity through interaction with a cleavage and polyadenylation factor (CF I). This chain is Poly(A) polymerase pla1 (pla1), found in Schizosaccharomyces pombe (strain 972 / ATCC 24843) (Fission yeast).